The primary structure comprises 215 residues: Chaperone protein TorD (215 aa).

The protein belongs to the TorD/DmsD family. TorD subfamily.

The protein resides in the cytoplasm. Functionally, involved in the biogenesis of TorA. Acts on TorA before the insertion of the molybdenum cofactor and, as a result, probably favors a conformation of the apoenzyme that is competent for acquiring the cofactor. The sequence is that of Chaperone protein TorD from Shewanella piezotolerans (strain WP3 / JCM 13877).